The following is a 147-amino-acid chain: Hemoglobin subunit deltaH (147 aa).

The region spanning 3-147 (RLTDSEKAEV…MANALAHKYH (145 aa)) is the Globin domain. Histidine 64 and histidine 93 together coordinate heme b.

It belongs to the globin family. Heterotetramer of two delta chains and two alpha chains. In terms of tissue distribution, red blood cells.

The protein is Hemoglobin subunit deltaH of Procavia capensis (Rock hyrax).